Here is a 177-residue protein sequence, read N- to C-terminus: Probable nicotinate-nucleotide adenylyltransferase (177 aa).

The protein belongs to the NadD family.

It catalyses the reaction nicotinate beta-D-ribonucleotide + ATP + H(+) = deamido-NAD(+) + diphosphate. It functions in the pathway cofactor biosynthesis; NAD(+) biosynthesis; deamido-NAD(+) from nicotinate D-ribonucleotide: step 1/1. Its function is as follows. Catalyzes the reversible adenylation of nicotinate mononucleotide (NaMN) to nicotinic acid adenine dinucleotide (NaAD). This chain is Probable nicotinate-nucleotide adenylyltransferase, found in Nitratiruptor sp. (strain SB155-2).